Reading from the N-terminus, the 187-residue chain is dCTP deaminase (187 aa).

Residues 107–112, 131–133, Gln152, Tyr166, Lys175, and Gln176 contribute to the dCTP site; these read KSTYAR and TLE. Residue Glu133 is the Proton donor/acceptor of the active site.

This sequence belongs to the dCTP deaminase family. Homotrimer.

It carries out the reaction dCTP + H2O + H(+) = dUTP + NH4(+). Its pathway is pyrimidine metabolism; dUMP biosynthesis; dUMP from dCTP (dUTP route): step 1/2. Its function is as follows. Catalyzes the deamination of dCTP to dUTP. This is dCTP deaminase from Ehrlichia canis (strain Jake).